The sequence spans 249 residues: 3alpha-hydroxy bile acid-CoA-ester 3-dehydrogenase 2 (249 aa).

NAD(+)-binding positions include T15 to I18, E38, E42, and N92. A substrate-binding site is contributed by S144. Residues Y157 and K161 each act as proton donor/acceptor in the active site. NAD(+) is bound by residues K161 and V190–T192.

The protein belongs to the short-chain dehydrogenases/reductases (SDR) family. Homotetramer.

The catalysed reaction is a 3alpha-hydroxy bile acid CoA + NAD(+) = a 3-oxo bile acid CoA + NADH + H(+). It carries out the reaction choloyl-CoA + NAD(+) = 7alpha,12alpha-dihydroxy-3-oxochol-24-oyl-CoA + NADH + H(+). The enzyme catalyses chenodeoxycholoyl-CoA + NAD(+) = 7alpha-hydroxy-3-oxochol-24-oyl-CoA + NADH + H(+). It catalyses the reaction deoxycholoyl-CoA + NAD(+) = 12alpha-hydroxy-3-oxocholan-24-oyl-CoA + NADH + H(+). The catalysed reaction is lithocholoyl-CoA + NAD(+) = 3-oxocholan-24-oyl-CoA + NADH + H(+). It functions in the pathway lipid metabolism; bile acid biosynthesis. In terms of biological role, involved in the multi-step bile acid 7alpha-dehydroxylation pathway that transforms primary bile acids to secondary bile acids in the human gut. Catalyzes the oxidation of C3-hydroxyl group of CoA conjugated bile acids generating a C3-oxo bile acid intermediate. Can use choloyl-CoA, chenodeoxycholoyl-CoA, deoxycholoyl-CoA, and lithocholoyl-CoA as substrates with similar efficiency. Highly prefers NAD over NADP as cosubstrate. Also catalyzes the reverse reactions; in vitro, the preferred direction of reaction depends on the pH. Has very little activity with unconjugated (non-CoA) bile acid substrates. The sequence is that of 3alpha-hydroxy bile acid-CoA-ester 3-dehydrogenase 2 (baiA2) from Clostridium scindens (strain JCM 10418 / VPI 12708).